Consider the following 407-residue polypeptide: Cytochrome P450-pinF2, plant-inducible (407 aa).

Cysteine 356 contacts heme.

Belongs to the cytochrome P450 family. Heme serves as cofactor.

Not essential for virulence, but may be involved in the detoxification of plant protective agents at the site of wounding. This chain is Cytochrome P450-pinF2, plant-inducible (cyp104), found in Rhizobium radiobacter (Agrobacterium tumefaciens).